The sequence spans 209 residues: Ras-related protein Rab-2-A (209 aa).

13 to 21 serves as a coordination point for GTP; that stretch reads GDTGVGKSC. The Effector region motif lies at 35–43; it reads HDLTIGVEF. GTP contacts are provided by residues 61-65, 119-122, and 149-151; these read DTAGQ, NKCD, and SAK. S-geranylgeranyl cysteine attachment occurs at residues Cys207 and Cys208.

It belongs to the small GTPase superfamily. Rab family.

The protein localises to the endoplasmic reticulum membrane. Its subcellular location is the golgi apparatus membrane. In terms of biological role, protein transport. Probably involved in vesicular traffic. This is Ras-related protein Rab-2-A (RAB2A) from Zea mays (Maize).